Here is a 237-residue protein sequence, read N- to C-terminus: UPF0053 inner membrane protein YgdQ (237 aa).

At 1–17 (MLFAWITDPNAWLALGT) the chain is on the periplasmic side. The chain crosses the membrane as a helical span at residues 18-38 (LTLLEIVLGIDNIIFLSLVVA). The Cytoplasmic segment spans residues 39 to 50 (KLPTAQRAHARR). The chain crosses the membrane as a helical span at residues 51–71 (LGLAGAMVMRLALLASIAWVT). The Periplasmic portion of the chain corresponds to 72–79 (RLTNPLFT). A helical membrane pass occupies residues 80–100 (IFSQEISARDLILLLGGLFLI). Residues 101 to 124 (WKASKEIHESIEGEEEGLKTRVSS) are Cytoplasmic-facing. The helical transmembrane segment at 125–145 (FLGAIVQIMLLDIIFSLDSVI) threads the bilayer. Residues 146–151 (TAVGLS) are Periplasmic-facing. A helical transmembrane segment spans residues 152-172 (DHLFIMMAAVVIAVGVMMFAA). Residues 173–186 (RSIGDFVERHPSVK) lie on the Cytoplasmic side of the membrane. Residues 187 to 207 (MLALSFLILVGFTLILESFDI) form a helical membrane-spanning segment. Residues 208–209 (HV) lie on the Periplasmic side of the membrane. The chain crosses the membrane as a helical span at residues 210–230 (PKGYIYFAMFFSIAVESLNLI). Over 231-237 (RNKKNPL) the chain is Cytoplasmic.

It belongs to the UPF0053 family.

The protein resides in the cell inner membrane. The sequence is that of UPF0053 inner membrane protein YgdQ (ygdQ) from Escherichia coli O157:H7.